Here is a 347-residue protein sequence, read N- to C-terminus: Ornithine transcarbamylase, mitochondrial (347 aa).

Residues 1–25 (MINSISNTVLLKSVVSKRFFSSSAK) constitute a mitochondrion transit peptide. Residues 84–87 (STRT), R135, H162, and Q165 contribute to the carbamoyl phosphate site. L-ornithine is bound by residues N194, D258, S262, and M263. C300 functions as the Proton acceptor in the catalytic mechanism. Residues 300–301 (CL) and R328 contribute to the carbamoyl phosphate site.

Belongs to the aspartate/ornithine carbamoyltransferase superfamily. OTCase family.

The protein resides in the mitochondrion matrix. The catalysed reaction is carbamoyl phosphate + L-ornithine = L-citrulline + phosphate + H(+). It participates in amino-acid biosynthesis; L-arginine biosynthesis; L-arginine from L-ornithine and carbamoyl phosphate: step 1/3. This chain is Ornithine transcarbamylase, mitochondrial (OTC), found in Pachysolen tannophilus (Yeast).